A 629-amino-acid chain; its full sequence is tRNA uridine 5-carboxymethylaminomethyl modification enzyme MnmG (629 aa).

13-18 (GGGHAG) provides a ligand contact to FAD. An NAD(+)-binding site is contributed by 273–287 (GPRYCPSIEDKINRF).

It belongs to the MnmG family. In terms of assembly, homodimer. Heterotetramer of two MnmE and two MnmG subunits. It depends on FAD as a cofactor.

Its subcellular location is the cytoplasm. Its function is as follows. NAD-binding protein involved in the addition of a carboxymethylaminomethyl (cmnm) group at the wobble position (U34) of certain tRNAs, forming tRNA-cmnm(5)s(2)U34. In Shewanella piezotolerans (strain WP3 / JCM 13877), this protein is tRNA uridine 5-carboxymethylaminomethyl modification enzyme MnmG.